Here is a 345-residue protein sequence, read N- to C-terminus: MSSAMRKTTNSPVVRRLTAAAVALGSCLALAGPAGSAGAAPADPVPTVFFGDSYTANFGIAPVTNQDSERGWCFQAKENYPAVATRSLADKGITLDVQADVSCGGALIHHFWEKQELPFGAGELPPQQDALKQDTQLTVGSLGGNTLGFNRILKQCSDELRKPSLLPGDPVDGDEPAAKCGEFFGTGDGKQWLDDQFERVGAELEELLDRIGYFAPDAKRVLVGYPRLVPEDTTKCLTAAPGQTQLPFADIPQDALPVLDQIQKRLNDAMKKAAADGGADFVDLYAGTGANTACDGADRGIGGLLEDSQLELLGTKIPWYAHPNDKGRDIQAKQVADKIEEILNR.

The signal sequence occupies residues 1-39 (MSSAMRKTTNSPVVRRLTAAAVALGSCLALAGPAGSAGA). Cystine bridges form between Cys73–Cys103, Cys156–Cys180, and Cys236–Cys294.

The protein resides in the secreted. In Streptomyces scabiei, this protein is Esterase (estA).